A 752-amino-acid chain; its full sequence is Photosystem I P700 chlorophyll a apoprotein A1 (752 aa).

The next 8 membrane-spanning stretches (helical) occupy residues 73–96 (IFAAHFGHLAVVTIWLSGMIFHGA), 159–182 (LYCTAIGGLVLAGLFLFAGWFHYH), 198–222 (LNHHLQVLLGCGSLGWAGHLIHVSA), 294–312 (IAHHHLAIAVVFIIAGHQY), 349–372 (WHAQLATNLAFLGSLTIIIAHHMY), 388–414 (LCIFTHHIWIGGFLIVGGAAHAAIFMV), 436–458 (AIISHLNWVCIFLGFHSFGLYIH), and 533–551 (FLIHHIHAFTIHVTVLILL). Positions 575 and 584 each coordinate [4Fe-4S] cluster. The next 2 helical transmembrane spans lie at 591 to 612 (HVFLGLFWMYNSLSIVIFHFSW) and 666 to 688 (LSAYGLMFLGAHFVWAFSLMFLF). His677 is a binding site for chlorophyll a'. 2 residues coordinate chlorophyll a: Met685 and Tyr693. Trp694 lines the phylloquinone pocket. Residues 726-746 (AVGVAHYLLGGIATTWAFFHA) form a helical membrane-spanning segment.

Belongs to the PsaA/PsaB family. In terms of assembly, the PsaA/B heterodimer binds the P700 chlorophyll special pair and subsequent electron acceptors. PSI consists of a core antenna complex that captures photons, and an electron transfer chain that converts photonic excitation into a charge separation. The cyanobacterial PSI reaction center is composed of one copy each of PsaA,B,C,D,E,F,I,J,K,L,M and X, and forms trimeric complexes. The cofactor is PSI electron transfer chain: 5 chlorophyll a, 1 chlorophyll a', 2 phylloquinones and 3 4Fe-4S clusters. PSI core antenna: 90 chlorophyll a, 22 carotenoids, 3 phospholipids and 1 galactolipid. P700 is a chlorophyll a/chlorophyll a' dimer, A0 is one or more chlorophyll a, A1 is one or both phylloquinones and FX is a shared 4Fe-4S iron-sulfur center..

The protein localises to the cellular thylakoid membrane. The enzyme catalyses reduced [plastocyanin] + hnu + oxidized [2Fe-2S]-[ferredoxin] = oxidized [plastocyanin] + reduced [2Fe-2S]-[ferredoxin]. Functionally, psaA and PsaB bind P700, the primary electron donor of photosystem I (PSI), as well as the electron acceptors A0, A1 and FX. PSI is a plastocyanin/cytochrome c6-ferredoxin oxidoreductase, converting photonic excitation into a charge separation, which transfers an electron from the donor P700 chlorophyll pair to the spectroscopically characterized acceptors A0, A1, FX, FA and FB in turn. Oxidized P700 is reduced on the lumenal side of the thylakoid membrane by plastocyanin or cytochrome c6. In Nostoc sp. (strain PCC 7120 / SAG 25.82 / UTEX 2576), this protein is Photosystem I P700 chlorophyll a apoprotein A1.